We begin with the raw amino-acid sequence, 74 residues long: MNATIFALLLLLNLAMHNAAEQSSETDMDDTLLIPEINRGRCIEEGKWCPKKAPCCGRLECKGPSPKQKKCTRP.

A signal peptide spans 1-19 (MNATIFALLLLLNLAMHNA). Residues 20-39 (AEQSSETDMDDTLLIPEINR) constitute a propeptide that is removed on maturation. 3 disulfide bridges follow: Cys42–Cys56, Cys49–Cys61, and Cys55–Cys71.

It belongs to the neurotoxin 36 family. 01 subfamily. As to expression, expressed by the venom gland.

Its subcellular location is the secreted. Probable ion channel inhibitor. This chain is U4-theraphotoxin-Cg1a, found in Chilobrachys guangxiensis (Chinese earth tiger tarantula).